The primary structure comprises 367 residues: tRNA-specific 2-thiouridylase MnmA (367 aa).

Residues A24–S31 and L50 each bind ATP. The active-site Nucleophile is the C115. Residues C115 and C211 are joined by a disulfide bond. G139 provides a ligand contact to ATP. An interaction with tRNA region spans residues K161–Q163. Catalysis depends on C211, which acts as the Cysteine persulfide intermediate.

Belongs to the MnmA/TRMU family.

The protein localises to the cytoplasm. The enzyme catalyses S-sulfanyl-L-cysteinyl-[protein] + uridine(34) in tRNA + AH2 + ATP = 2-thiouridine(34) in tRNA + L-cysteinyl-[protein] + A + AMP + diphosphate + H(+). Catalyzes the 2-thiolation of uridine at the wobble position (U34) of tRNA, leading to the formation of s(2)U34. This chain is tRNA-specific 2-thiouridylase MnmA, found in Ehrlichia canis (strain Jake).